Here is a 481-residue protein sequence, read N- to C-terminus: GDP-fucose protein O-fucosyltransferase 3 (481 aa).

Topologically, residues 1 to 8 (MVRFQRRK) are cytoplasmic. A helical; Signal-anchor for type II membrane protein membrane pass occupies residues 9–31 (LLASCLCVTATVFLMVTLQVVVE). Over 32–481 (LGKFERKKLK…EEFWALVFKD (450 aa)) the chain is Lumenal. N-linked (GlcNAc...) asparagine glycans are attached at residues Asn110, Asn168, and Asn318. Cys389 and Cys392 are oxidised to a cystine. An N-linked (GlcNAc...) asparagine glycan is attached at Asn468.

It belongs to the glycosyltransferase 10 family. As to expression, widely expressed, with a higher expression in liver and thymus.

The protein localises to the endoplasmic reticulum membrane. It carries out the reaction L-threonyl-[protein] + GDP-beta-L-fucose = 3-O-(alpha-L-fucosyl)-L-threonyl-[protein] + GDP + H(+). The catalysed reaction is L-seryl-[protein] + GDP-beta-L-fucose = 3-O-(alpha-L-fucosyl)-L-seryl-[protein] + GDP + H(+). Its pathway is protein modification; protein glycosylation. Its function is as follows. Protein O-fucosyltransferase that specifically catalyzes O-fucosylation of serine or threonine residues in EMI domains of target proteins, such as MMRN1, MMRN2 and EMID1. Attaches fucose through an O-glycosidic linkage. O-fucosylation of EMI domain-containing proteins may be required for facilitating protein folding and secretion. May also show alpha-(1,3)-fucosyltransferase activity toward the innermost N-acetyl glucosamine (GlcNAc) residue in biantennary N-glycan acceptors. However, this was tested with a library of synthetic substrates and this activity is unsure in vivo. May be involved in biosynthesis of Lewis X-carrying biantennary N-glycans that regulate neuron stem cell self-renewal during brain development. The sequence is that of GDP-fucose protein O-fucosyltransferase 3 from Mus musculus (Mouse).